Reading from the N-terminus, the 270-residue chain is Pre-mRNA-splicing factor CWC23 (270 aa).

In terms of domain architecture, J spans 12–84 (DLYRILHIHV…EHKKEYDIWY (73 aa)).

The protein belongs to the DnaJ family. As to quaternary structure, associated with the spliceosome.

The protein resides in the cytoplasm. The protein localises to the nucleus. Its function is as follows. Involved in pre-mRNA splicing. May be involved in endoplasmic reticulum-associated protein degradation (ERAD) and required for growth at low and high temperatures. The protein is Pre-mRNA-splicing factor CWC23 (CWC23) of Kluyveromyces lactis (strain ATCC 8585 / CBS 2359 / DSM 70799 / NBRC 1267 / NRRL Y-1140 / WM37) (Yeast).